Reading from the N-terminus, the 712-residue chain is Saccharolysin (712 aa).

Ser73 is subject to Phosphoserine. Residue His501 coordinates Zn(2+). Residue Glu502 is part of the active site. Zn(2+) is bound by residues His505 and His508.

This sequence belongs to the peptidase M3 family. It depends on Zn(2+) as a cofactor.

The protein resides in the cytoplasm. It catalyses the reaction Cleavage of Pro-|-Phe and Ala-|-Ala bonds.. In terms of biological role, could be involved in late stage of protein degradation. In Saccharomyces cerevisiae (strain ATCC 204508 / S288c) (Baker's yeast), this protein is Saccharolysin (PRD1).